The chain runs to 237 residues: Ribosomal RNA small subunit methyltransferase G (237 aa).

S-adenosyl-L-methionine contacts are provided by residues Gly78, Phe83, 129-130 (AE), and Arg148.

This sequence belongs to the methyltransferase superfamily. RNA methyltransferase RsmG family.

It is found in the cytoplasm. In terms of biological role, specifically methylates the N7 position of a guanine in 16S rRNA. The protein is Ribosomal RNA small subunit methyltransferase G of Clostridium kluyveri (strain ATCC 8527 / DSM 555 / NBRC 12016 / NCIMB 10680 / K1).